Consider the following 299-residue polypeptide: Bifunctional protein FolD (299 aa).

NADP(+) is bound by residues 168-170 (GRS), serine 193, and isoleucine 234.

The protein belongs to the tetrahydrofolate dehydrogenase/cyclohydrolase family. Homodimer.

It catalyses the reaction (6R)-5,10-methylene-5,6,7,8-tetrahydrofolate + NADP(+) = (6R)-5,10-methenyltetrahydrofolate + NADPH. The enzyme catalyses (6R)-5,10-methenyltetrahydrofolate + H2O = (6R)-10-formyltetrahydrofolate + H(+). It participates in one-carbon metabolism; tetrahydrofolate interconversion. Catalyzes the oxidation of 5,10-methylenetetrahydrofolate to 5,10-methenyltetrahydrofolate and then the hydrolysis of 5,10-methenyltetrahydrofolate to 10-formyltetrahydrofolate. The protein is Bifunctional protein FolD of Brucella anthropi (strain ATCC 49188 / DSM 6882 / CCUG 24695 / JCM 21032 / LMG 3331 / NBRC 15819 / NCTC 12168 / Alc 37) (Ochrobactrum anthropi).